We begin with the raw amino-acid sequence, 947 residues long: Bifunctional glutamine synthetase adenylyltransferase/adenylyl-removing enzyme (947 aa).

Positions 1-440 (MTPLSSPLRQ…VFNELIGDDE (440 aa)) are adenylyl removase. An adenylyl transferase region spans residues 450-947 (SEPWREVWQD…ASWRKWLVAV (498 aa)).

Belongs to the GlnE family. Mg(2+) serves as cofactor.

The enzyme catalyses [glutamine synthetase]-O(4)-(5'-adenylyl)-L-tyrosine + phosphate = [glutamine synthetase]-L-tyrosine + ADP. It carries out the reaction [glutamine synthetase]-L-tyrosine + ATP = [glutamine synthetase]-O(4)-(5'-adenylyl)-L-tyrosine + diphosphate. Functionally, involved in the regulation of glutamine synthetase GlnA, a key enzyme in the process to assimilate ammonia. When cellular nitrogen levels are high, the C-terminal adenylyl transferase (AT) inactivates GlnA by covalent transfer of an adenylyl group from ATP to specific tyrosine residue of GlnA, thus reducing its activity. Conversely, when nitrogen levels are low, the N-terminal adenylyl removase (AR) activates GlnA by removing the adenylyl group by phosphorolysis, increasing its activity. The regulatory region of GlnE binds the signal transduction protein PII (GlnB) which indicates the nitrogen status of the cell. In Salmonella arizonae (strain ATCC BAA-731 / CDC346-86 / RSK2980), this protein is Bifunctional glutamine synthetase adenylyltransferase/adenylyl-removing enzyme.